Here is a 96-residue protein sequence, read N- to C-terminus: UPF0235 protein Sputw3181_1321 (96 aa).

Belongs to the UPF0235 family.

In Shewanella sp. (strain W3-18-1), this protein is UPF0235 protein Sputw3181_1321.